Reading from the N-terminus, the 432-residue chain is Polyamine export protein (432 aa).

One can recognise a CNNM transmembrane domain in the interval 1–201 (MIMELFHTIL…AEAGVLKTQE (201 aa)). The next 4 helical transmembrane spans lie at 2–22 (IMEL…SAVV), 61–81 (FITV…GIGE), 100–120 (WIAP…FILF), and 138–158 (LSVV…VWFF). 2 CBS domains span residues 220–279 (MTTR…NENV) and 286–345 (LLRK…SNEE).

The protein belongs to the UPF0053 family. PaeA subfamily.

The protein resides in the cell inner membrane. Functionally, involved in cadaverine and putrescine tolerance in stationary phase. May facilitate the efflux of both cadaverine and putrescine from the cytoplasm, reducing potentially toxic levels under certain stress conditions. The polypeptide is Polyamine export protein (Haemophilus influenzae (strain ATCC 51907 / DSM 11121 / KW20 / Rd)).